Here is an 890-residue protein sequence, read N- to C-terminus: Alanine--tRNA ligase (890 aa).

4 residues coordinate Zn(2+): histidine 564, histidine 568, cysteine 677, and histidine 681.

It belongs to the class-II aminoacyl-tRNA synthetase family. It depends on Zn(2+) as a cofactor.

Its subcellular location is the cytoplasm. It carries out the reaction tRNA(Ala) + L-alanine + ATP = L-alanyl-tRNA(Ala) + AMP + diphosphate. Catalyzes the attachment of alanine to tRNA(Ala) in a two-step reaction: alanine is first activated by ATP to form Ala-AMP and then transferred to the acceptor end of tRNA(Ala). Also edits incorrectly charged Ser-tRNA(Ala) and Gly-tRNA(Ala) via its editing domain. The protein is Alanine--tRNA ligase of Rhodopseudomonas palustris (strain BisB18).